The following is a 245-amino-acid chain: Ribonuclease PH (245 aa).

Phosphate is bound by residues R86 and 124–126 (GTR).

It belongs to the RNase PH family. Homohexameric ring arranged as a trimer of dimers.

It catalyses the reaction tRNA(n+1) + phosphate = tRNA(n) + a ribonucleoside 5'-diphosphate. Phosphorolytic 3'-5' exoribonuclease that plays an important role in tRNA 3'-end maturation. Removes nucleotide residues following the 3'-CCA terminus of tRNAs; can also add nucleotides to the ends of RNA molecules by using nucleoside diphosphates as substrates, but this may not be physiologically important. Probably plays a role in initiation of 16S rRNA degradation (leading to ribosome degradation) during starvation. The polypeptide is Ribonuclease PH (Bacillus cytotoxicus (strain DSM 22905 / CIP 110041 / 391-98 / NVH 391-98)).